A 1103-amino-acid polypeptide reads, in one-letter code: Platelet-derived growth factor receptor beta (1103 aa).

An N-terminal signal peptide occupies residues 1-31 (MQVPGTMPAPVLKGQALWLPLLLMLSPQASG). Ig-like C2-type domains are found at residues 33-120 (LVIT…YIFV), 129-210 (PVDP…YSLQ), 214-309 (INVS…INVT), 331-403 (HRSR…HEDA), and 416-524 (PVRV…VTVV). The Extracellular segment spans residues 33–532 (LVITPPGPEL…VVPHSLPFKV (500 aa)). N-linked (GlcNAc...) asparagine glycosylation is found at Asn45 and Asn89. Intrachain disulfides connect Cys54-Cys100 and Cys149-Cys190. Asn215 and Asn230 each carry an N-linked (GlcNAc...) asparagine glycan. Residues Cys235 and Cys291 are joined by a disulfide bond. 6 N-linked (GlcNAc...) asparagine glycosylation sites follow: Asn292, Asn307, Asn354, Asn371, Asn468, and Asn479. Cys436 and Cys508 are oxidised to a cystine. A helical membrane pass occupies residues 533 to 553 (VVISAILALVVLTIISLIILI). At 554–1103 (MLWQKKPRYE…PRAEAEDSFL (550 aa)) the chain is on the cytoplasmic side. A phosphotyrosine; by autocatalysis mark is found at Tyr562, Tyr579, and Tyr581. Residues 600-962 (LVLGRTLGSG…QLVLLLERLL (363 aa)) enclose the Protein kinase domain. ATP is bound by residues 606-614 (LGSGAFGQV) and Lys634. Tyr686 bears the Phosphotyrosine; by ABL1 and ABL2 mark. Tyr716, Tyr740, Tyr751, Tyr763, Tyr771, Tyr775, and Tyr778 each carry phosphotyrosine; by autocatalysis. The Proton acceptor role is filled by Asp826. Position 857 is a phosphotyrosine; by autocatalysis (Tyr857). Phosphotyrosine; by ABL1 and ABL2 occurs at positions 934 and 970. Phosphotyrosine; by autocatalysis is present on residues Tyr1009 and Tyr1021. The tract at residues 1017–1103 (GDNDYIIPLP…PRAEAEDSFL (87 aa)) is disordered. Over residues 1039–1059 (SSPSLASSTLNEVNTSSTISC) the composition is skewed to polar residues. The span at 1065–1075 (PQEEPEPEPEP) shows a compositional bias: acidic residues. Residues 1076–1086 (QPEPQVVPEPP) show a composition bias toward pro residues.

It belongs to the protein kinase superfamily. Tyr protein kinase family. CSF-1/PDGF receptor subfamily. As to quaternary structure, interacts with homodimeric PDGFB and PDGFD, and with heterodimers formed by PDGFA and PDGFB. May also interact with homodimeric PDGFC. Monomer in the absence of bound ligand. Interaction with homodimeric PDGFB, heterodimers formed by PDGFA and PDGFB or homodimeric PDGFD, leads to receptor dimerization, where both PDGFRA homodimers and heterodimers with PDGFRB are observed. Interacts with SH2B2/APS. Interacts directly (tyrosine phosphorylated) with SHB. Interacts (tyrosine phosphorylated) with PIK3R1 and RASA1. Interacts (tyrosine phosphorylated) with CBL. Interacts (tyrosine phosphorylated) with SRC and SRC family kinases. Interacts (tyrosine phosphorylated) with PIK3C2B, maybe indirectly. Interacts (tyrosine phosphorylated) with SHC1, GRB7, GRB10 and NCK1. Interaction with GRB2 is mediated by SHC1. Interacts (via C-terminus) with NHERF1. In terms of processing, N-glycosylated. Ubiquitinated. After autophosphorylation, the receptor is polyubiquitinated, leading to its degradation. Post-translationally, autophosphorylated on tyrosine residues upon ligand binding. Autophosphorylation occurs in trans, i.e. one subunit of the dimeric receptor phosphorylates tyrosine residues on the other subunit. Phosphorylation at Tyr-579, and to a lesser degree, Tyr-581 is important for interaction with SRC. Phosphorylation at Tyr-716 is important for interaction with GRB2. Phosphorylation at Tyr-740 and Tyr-751 is important for interaction with PIK3R1. Phosphorylation at Tyr-751 is important for interaction with NCK1. Phosphorylation at Tyr-771 and Tyr-857 is important for interaction with RASA1/GAP. Phosphorylation at Tyr-857 is important for efficient phosphorylation of PLCG1 and PTPN11, resulting in increased phosphorylation of AKT1, MAPK1/ERK2 and/or MAPK3/ERK1, PDCD6IP/ALIX and STAM, and in increased cell proliferation. Phosphorylation at Tyr-1009 is important for interaction with PTPN11. Phosphorylation at Tyr-1009 and Tyr-1021 is important for interaction with PLCG1. Dephosphorylated by PTPRJ at Tyr-751, Tyr-857, Tyr-1009 and Tyr-1021. Dephosphorylated by PTPN2 at Tyr-579 and Tyr-1021.

The protein localises to the cell membrane. It is found in the cytoplasmic vesicle. The protein resides in the lysosome lumen. The catalysed reaction is L-tyrosyl-[protein] + ATP = O-phospho-L-tyrosyl-[protein] + ADP + H(+). Its activity is regulated as follows. Present in an inactive conformation in the absence of bound ligand. Binding of PDGFB and/or PDGFD leads to dimerization and activation by autophosphorylation on tyrosine residues. Its function is as follows. Tyrosine-protein kinase that acts as a cell-surface receptor for homodimeric PDGFB and PDGFD and for heterodimers formed by PDGFA and PDGFB, and plays an essential role in the regulation of embryonic development, cell proliferation, survival, differentiation, chemotaxis and migration. Plays an essential role in blood vessel development by promoting proliferation, migration and recruitment of pericytes and smooth muscle cells to endothelial cells. Plays a role in the migration of vascular smooth muscle cells and the formation of neointima at vascular injury sites. Required for normal development of the cardiovascular system. Required for normal recruitment of pericytes (mesangial cells) in the kidney glomerulus, and for normal formation of a branched network of capillaries in kidney glomeruli. Promotes rearrangement of the actin cytoskeleton and the formation of membrane ruffles. Binding of its cognate ligands - homodimeric PDGFB, heterodimers formed by PDGFA and PDGFB or homodimeric PDGFD -leads to the activation of several signaling cascades; the response depends on the nature of the bound ligand and is modulated by the formation of heterodimers between PDGFRA and PDGFRB. Phosphorylates PLCG1, PIK3R1, PTPN11, RASA1/GAP, CBL, SHC1 and NCK1. Activation of PLCG1 leads to the production of the cellular signaling molecules diacylglycerol and inositol 1,4,5-trisphosphate, mobilization of cytosolic Ca(2+) and the activation of protein kinase C. Phosphorylation of PIK3R1, the regulatory subunit of phosphatidylinositol 3-kinase, leads to the activation of the AKT1 signaling pathway. Phosphorylation of SHC1, or of the C-terminus of PTPN11, creates a binding site for GRB2, resulting in the activation of HRAS, RAF1 and down-stream MAP kinases, including MAPK1/ERK2 and/or MAPK3/ERK1. Promotes phosphorylation and activation of SRC family kinases. Promotes phosphorylation of PDCD6IP/ALIX and STAM. Receptor signaling is down-regulated by protein phosphatases that dephosphorylate the receptor and its down-stream effectors, and by rapid internalization of the activated receptor. This is Platelet-derived growth factor receptor beta (PDGFRB) from Canis lupus familiaris (Dog).